The sequence spans 186 residues: Akirin-1 (186 aa).

The disordered stretch occupies residues 1–64; it reads MACGATLKRS…PLPQLGGDRR (64 aa). The Nuclear localization signal motif lies at 22–27; the sequence is PKRRRC. Positions 49-60 are enriched in low complexity; that stretch reads QQGQQQPLPQLG. Positions 183-186 match the SYVS motif motif; sequence SYVS.

This sequence belongs to the akirin family.

The protein resides in the nucleus. Its function is as follows. Molecular adapter that acts as a bridge between proteins, and which is involved skeletal muscle development. Functions as a signal transducer for MSTN during skeletal muscle regeneration and myogenesis. The sequence is that of Akirin-1 from Xenopus tropicalis (Western clawed frog).